A 156-amino-acid chain; its full sequence is 6,7-dimethyl-8-ribityllumazine synthase (156 aa).

Residues F23, 57–59 (AYE), and 81–83 (AII) contribute to the 5-amino-6-(D-ribitylamino)uracil site. 86-87 (GT) is a binding site for (2S)-2-hydroxy-3-oxobutyl phosphate. The Proton donor role is filled by H89. F114 lines the 5-amino-6-(D-ribitylamino)uracil pocket. A (2S)-2-hydroxy-3-oxobutyl phosphate-binding site is contributed by R128.

It belongs to the DMRL synthase family.

It catalyses the reaction (2S)-2-hydroxy-3-oxobutyl phosphate + 5-amino-6-(D-ribitylamino)uracil = 6,7-dimethyl-8-(1-D-ribityl)lumazine + phosphate + 2 H2O + H(+). Its pathway is cofactor biosynthesis; riboflavin biosynthesis; riboflavin from 2-hydroxy-3-oxobutyl phosphate and 5-amino-6-(D-ribitylamino)uracil: step 1/2. Its function is as follows. Catalyzes the formation of 6,7-dimethyl-8-ribityllumazine by condensation of 5-amino-6-(D-ribitylamino)uracil with 3,4-dihydroxy-2-butanone 4-phosphate. This is the penultimate step in the biosynthesis of riboflavin. This Helicobacter pylori (strain HPAG1) protein is 6,7-dimethyl-8-ribityllumazine synthase.